The sequence spans 194 residues: Alkyl hydroperoxide reductase AhpD (194 aa).

C132 (proton donor) is an active-site residue. A disulfide bond links C132 and C135. The Cysteine sulfenic acid (-SOH) intermediate role is filled by C135.

This sequence belongs to the AhpD family.

It catalyses the reaction N(6)-[(R)-dihydrolipoyl]-L-lysyl-[lipoyl-carrier protein] + a hydroperoxide = N(6)-[(R)-lipoyl]-L-lysyl-[lipoyl-carrier protein] + an alcohol + H2O. In terms of biological role, antioxidant protein with alkyl hydroperoxidase activity. Required for the reduction of the AhpC active site cysteine residues and for the regeneration of the AhpC enzyme activity. The sequence is that of Alkyl hydroperoxide reductase AhpD from Koribacter versatilis (strain Ellin345).